A 401-amino-acid polypeptide reads, in one-letter code: Argininosuccinate synthase (401 aa).

Position 8–16 (8–16) interacts with ATP; it reads AYSGGLDTS. Y87 contacts L-citrulline. Residue G117 participates in ATP binding. 3 residues coordinate L-aspartate: T119, N123, and D124. N123 lines the L-citrulline pocket. R127, S175, E259, and Y271 together coordinate L-citrulline.

It belongs to the argininosuccinate synthase family. Type 1 subfamily. As to quaternary structure, homotetramer.

The protein localises to the cytoplasm. The enzyme catalyses L-citrulline + L-aspartate + ATP = 2-(N(omega)-L-arginino)succinate + AMP + diphosphate + H(+). The protein operates within amino-acid biosynthesis; L-arginine biosynthesis; L-arginine from L-ornithine and carbamoyl phosphate: step 2/3. In Pseudarthrobacter chlorophenolicus (strain ATCC 700700 / DSM 12829 / CIP 107037 / JCM 12360 / KCTC 9906 / NCIMB 13794 / A6) (Arthrobacter chlorophenolicus), this protein is Argininosuccinate synthase.